Consider the following 347-residue polypeptide: tRNA N6-adenosine threonylcarbamoyltransferase (347 aa).

2 residues coordinate Fe cation: histidine 109 and histidine 113. Substrate is bound by residues threonine 136–glycine 140, aspartate 169, glycine 182, aspartate 186, and asparagine 284. Aspartate 312 lines the Fe cation pocket.

The protein belongs to the KAE1 / TsaD family. Requires Fe(2+) as cofactor.

It localises to the cytoplasm. It carries out the reaction L-threonylcarbamoyladenylate + adenosine(37) in tRNA = N(6)-L-threonylcarbamoyladenosine(37) in tRNA + AMP + H(+). In terms of biological role, required for the formation of a threonylcarbamoyl group on adenosine at position 37 (t(6)A37) in tRNAs that read codons beginning with adenine. Is involved in the transfer of the threonylcarbamoyl moiety of threonylcarbamoyl-AMP (TC-AMP) to the N6 group of A37, together with TsaE and TsaB. TsaD likely plays a direct catalytic role in this reaction. In Chlorobium phaeobacteroides (strain BS1), this protein is tRNA N6-adenosine threonylcarbamoyltransferase.